A 111-amino-acid polypeptide reads, in one-letter code: Putative single-stranded DNA-binding protein ycf41 (111 aa).

One can recognise an SSB domain in the interval Met1–Lys98.

Its subcellular location is the plastid. The protein localises to the chloroplast. The sequence is that of Putative single-stranded DNA-binding protein ycf41 (ycf41) from Pyropia yezoensis (Susabi-nori).